Consider the following 229-residue polypeptide: Phosphoglycolate phosphatase (229 aa).

The Nucleophile role is filled by Asp-13. Residues Asp-13, Asp-15, and Asp-178 each coordinate Mg(2+).

Belongs to the HAD-like hydrolase superfamily. CbbY/CbbZ/Gph/YieH family. Requires Mg(2+) as cofactor.

The enzyme catalyses 2-phosphoglycolate + H2O = glycolate + phosphate. It functions in the pathway organic acid metabolism; glycolate biosynthesis; glycolate from 2-phosphoglycolate: step 1/1. Specifically catalyzes the dephosphorylation of 2-phosphoglycolate. Is involved in the dissimilation of the intracellular 2-phosphoglycolate formed during the DNA repair of 3'-phosphoglycolate ends, a major class of DNA lesions induced by oxidative stress. In Photobacterium profundum (strain SS9), this protein is Phosphoglycolate phosphatase.